Here is a 393-residue protein sequence, read N- to C-terminus: Sulfate adenylyltransferase (393 aa).

It belongs to the sulfate adenylyltransferase family.

It carries out the reaction sulfate + ATP + H(+) = adenosine 5'-phosphosulfate + diphosphate. The protein operates within sulfur metabolism; hydrogen sulfide biosynthesis; sulfite from sulfate: step 1/3. The sequence is that of Sulfate adenylyltransferase from Synechococcus sp. (strain JA-3-3Ab) (Cyanobacteria bacterium Yellowstone A-Prime).